The sequence spans 178 residues: CASP-like protein 5A1 (178 aa).

The tract at residues 1-24 is disordered; the sequence is MFASRPAVHPVEAPPPTDPVEQPT. Topologically, residues 1-37 are cytoplasmic; that stretch reads MFASRPAVHPVEAPPPTDPVEQPTGVLMKDLPGMPGT. Residues 38–58 form a helical membrane-spanning segment; the sequence is AGGLGLRVAQFVFAGVALAVM. Residues 59-69 are Extracellular-facing; it reads ASTSDFPSVTA. The chain crosses the membrane as a helical span at residues 70–90; it reads FCYLVAATIMQCLWSFSLAIV. The Cytoplasmic segment spans residues 91 to 105; sequence DIYALLVKRCLRNRR. Residues 106–126 form a helical membrane-spanning segment; sequence AVCLFAIGDGITAALTFGAAC. Residues 127–152 lie on the Extracellular side of the membrane; sequence SSAGITVLIDNDLNICAENHCGSFKT. The helical transmembrane segment at 153–173 threads the bilayer; the sequence is ATALAFMSWFALTPSFLLNFW. Residues 174 to 178 are Cytoplasmic-facing; it reads SMAAR.

This sequence belongs to the Casparian strip membrane proteins (CASP) family. As to quaternary structure, homodimer and heterodimers.

Its subcellular location is the cell membrane. The protein is CASP-like protein 5A1 of Brachypodium distachyon (Purple false brome).